A 534-amino-acid polypeptide reads, in one-letter code: CTP synthase (534 aa).

Residues 1–265 are amidoligase domain; sequence MKYIIVTGGV…TTQLMKHLQL (265 aa). Serine 12 contributes to the CTP binding site. Serine 12 contacts UTP. 13 to 18 contacts ATP; the sequence is GLGKGI. Tyrosine 53 contacts L-glutamine. Aspartate 70 is an ATP binding site. Mg(2+) contacts are provided by aspartate 70 and glutamate 140. CTP is bound by residues 147 to 149, 186 to 191, and lysine 222; these read DIE and KTKPSQ. UTP contacts are provided by residues 186 to 191 and lysine 222; that span reads KTKPSQ. The Glutamine amidotransferase type-1 domain occupies 289-530; sequence KLAIVGKYTN…VAAMCKYRKE (242 aa). Glycine 352 contributes to the L-glutamine binding site. The active-site Nucleophile; for glutamine hydrolysis is the cysteine 379. L-glutamine contacts are provided by residues 380-383, glutamate 403, and arginine 460; that span reads LGMQ. Active-site residues include histidine 503 and glutamate 505.

This sequence belongs to the CTP synthase family. In terms of assembly, homotetramer.

It catalyses the reaction UTP + L-glutamine + ATP + H2O = CTP + L-glutamate + ADP + phosphate + 2 H(+). The catalysed reaction is L-glutamine + H2O = L-glutamate + NH4(+). The enzyme catalyses UTP + NH4(+) + ATP = CTP + ADP + phosphate + 2 H(+). The protein operates within pyrimidine metabolism; CTP biosynthesis via de novo pathway; CTP from UDP: step 2/2. Allosterically activated by GTP, when glutamine is the substrate; GTP has no effect on the reaction when ammonia is the substrate. The allosteric effector GTP functions by stabilizing the protein conformation that binds the tetrahedral intermediate(s) formed during glutamine hydrolysis. Inhibited by the product CTP, via allosteric rather than competitive inhibition. In terms of biological role, catalyzes the ATP-dependent amination of UTP to CTP with either L-glutamine or ammonia as the source of nitrogen. Regulates intracellular CTP levels through interactions with the four ribonucleotide triphosphates. The protein is CTP synthase of Methanosarcina barkeri (strain Fusaro / DSM 804).